Reading from the N-terminus, the 178-residue chain is Alkyl hydroperoxide reductase AhpD (178 aa).

The active-site Proton donor is Cys130. A disulfide bond links Cys130 and Cys133. The Cysteine sulfenic acid (-SOH) intermediate role is filled by Cys133.

Belongs to the AhpD family. Homotrimer.

It carries out the reaction N(6)-[(R)-dihydrolipoyl]-L-lysyl-[lipoyl-carrier protein] + a hydroperoxide = N(6)-[(R)-lipoyl]-L-lysyl-[lipoyl-carrier protein] + an alcohol + H2O. Functionally, antioxidant protein with alkyl hydroperoxidase activity. Required for the reduction of the AhpC active site cysteine residues and for the regeneration of the AhpC enzyme activity. This chain is Alkyl hydroperoxide reductase AhpD, found in Mycobacterium marinum (strain ATCC BAA-535 / M).